Reading from the N-terminus, the 808-residue chain is Ribosome biogenesis protein BOP1 homolog (808 aa).

A disordered region spans residues Met-1–Thr-56. Composition is skewed to low complexity over residues Arg-12–Pro-24 and Ala-33–Asp-50. WD repeat units lie at residues Gly-430–Arg-469, Lys-640–Lys-680, Ser-682–Lys-720, Ser-724–Lys-766, and Lys-777–Glu-808.

It belongs to the WD repeat BOP1/ERB1 family.

Its subcellular location is the nucleus. It localises to the nucleolus. It is found in the nucleoplasm. Functionally, required for maturation of ribosomal RNAs and formation of the large ribosomal subunit. In Leishmania infantum, this protein is Ribosome biogenesis protein BOP1 homolog.